A 678-amino-acid polypeptide reads, in one-letter code: Pescadillo homolog (678 aa).

The segment covering 283 to 303 (EEEEPEEVDSEAGDEDDDDLP) has biased composition (acidic residues). Positions 283 to 316 (EEEEPEEVDSEAGDEDDDDLPVLDSGTRRRRAAA) are disordered. Residues 361–451 (VCGSLFRGRV…VLMPTDLYAP (91 aa)) form the BRCT domain. Positions 552-587 (MTRKARKMYNNMKQKEAAKQERVQQLESKKAKLAAT) form a coiled coil. Positions 563 to 678 (MKQKEAAKQE…DAAPAKRQRR (116 aa)) are disordered. Basic and acidic residues predominate over residues 564 to 581 (KQKEAAKQERVQQLESKK). Composition is skewed to low complexity over residues 597-618 (KPAA…VAAS) and 630-661 (APAP…AAKE). Over residues 662–672 (APAKGGKDAAP) the composition is skewed to basic and acidic residues.

Belongs to the pescadillo family.

It localises to the nucleus. It is found in the nucleolus. Its subcellular location is the nucleoplasm. Required for maturation of ribosomal RNAs and formation of the large ribosomal subunit. This chain is Pescadillo homolog, found in Chlamydomonas reinhardtii (Chlamydomonas smithii).